We begin with the raw amino-acid sequence, 360 residues long: GTP 3',8-cyclase (360 aa).

The disordered stretch occupies residues 1–31 (MTVTALGVPTVRGRSEGSAVASDAPGDGPLL). Residues 33-251 (RFGRSATDLR…LQPHFRLRPD (219 aa)) form the Radical SAM core domain. GTP is bound at residue Arg-42. Positions 49 and 53 each coordinate [4Fe-4S] cluster. Residue Tyr-55 coordinates S-adenosyl-L-methionine. Cys-56 is a binding site for [4Fe-4S] cluster. Residue Arg-93 participates in GTP binding. Residue Gly-97 coordinates S-adenosyl-L-methionine. GTP is bound at residue Thr-124. Ser-148 lines the S-adenosyl-L-methionine pocket. Lys-185 serves as a coordination point for GTP. Met-219 contributes to the S-adenosyl-L-methionine binding site. 2 residues coordinate [4Fe-4S] cluster: Cys-287 and Cys-290. Residue 292-294 (RTR) coordinates GTP. Cys-304 is a [4Fe-4S] cluster binding site.

This sequence belongs to the radical SAM superfamily. MoaA family. Monomer and homodimer. It depends on [4Fe-4S] cluster as a cofactor.

The enzyme catalyses GTP + AH2 + S-adenosyl-L-methionine = (8S)-3',8-cyclo-7,8-dihydroguanosine 5'-triphosphate + 5'-deoxyadenosine + L-methionine + A + H(+). Its pathway is cofactor biosynthesis; molybdopterin biosynthesis. In terms of biological role, catalyzes the cyclization of GTP to (8S)-3',8-cyclo-7,8-dihydroguanosine 5'-triphosphate. In Mycobacterium ulcerans (strain Agy99), this protein is GTP 3',8-cyclase.